The sequence spans 331 residues: Anthranilate phosphoribosyltransferase (331 aa).

Residues Gly78, 81 to 82 (GD), Ser86, 88 to 91 (NIST), 106 to 114 (KHGNKSITS), and Ser118 contribute to the 5-phospho-alpha-D-ribose 1-diphosphate site. Anthranilate is bound at residue Gly78. Ser90 is a Mg(2+) binding site. An anthranilate-binding site is contributed by Asn109. Arg163 provides a ligand contact to anthranilate. Mg(2+)-binding residues include Asp222 and Glu223.

This sequence belongs to the anthranilate phosphoribosyltransferase family. Homodimer. It depends on Mg(2+) as a cofactor.

The catalysed reaction is N-(5-phospho-beta-D-ribosyl)anthranilate + diphosphate = 5-phospho-alpha-D-ribose 1-diphosphate + anthranilate. It functions in the pathway amino-acid biosynthesis; L-tryptophan biosynthesis; L-tryptophan from chorismate: step 2/5. In terms of biological role, catalyzes the transfer of the phosphoribosyl group of 5-phosphorylribose-1-pyrophosphate (PRPP) to anthranilate to yield N-(5'-phosphoribosyl)-anthranilate (PRA). The sequence is that of Anthranilate phosphoribosyltransferase from Staphylococcus epidermidis (strain ATCC 35984 / DSM 28319 / BCRC 17069 / CCUG 31568 / BM 3577 / RP62A).